Here is a 1170-residue protein sequence, read N- to C-terminus: Cellulose synthase-like protein D2 (1170 aa).

Disordered regions lie at residues M1–G75 and N269–S295. Residues R10 to G24 show a composition bias toward low complexity. Positions N273–G288 are enriched in gly residues. 2 helical membrane-spanning segments follow: residues V311 to A331 and A341 to L361. D441 is an active-site residue. A coiled-coil region spans residues H527–K551. D873 is a catalytic residue. Helical transmembrane passes span I955 to V975, T981 to I1001, L1027 to L1047, S1070 to F1090, L1104 to G1124, and T1134 to I1154.

Belongs to the glycosyltransferase 2 family. Plant cellulose synthase-like D subfamily.

Its subcellular location is the golgi apparatus membrane. Thought to be a Golgi-localized beta-glycan synthase that polymerize the backbones of noncellulosic polysaccharides (hemicelluloses) of plant cell wall. The protein is Cellulose synthase-like protein D2 (CSLD2) of Oryza sativa subsp. indica (Rice).